A 280-amino-acid chain; its full sequence is Undecaprenyl-diphosphatase (280 aa).

Transmembrane regions (helical) follow at residues 3 to 23 (IILLIQAVIMGIVEGITEFLP), 45 to 65 (VDLFVVVVQFGAILAVIYDYW), 88 to 108 (QLGLSLIVATIPVMIVGFTFA), 115 to 135 (LFNPIVVAIMLIIGGLLIFYV), 150 to 170 (VSLKTALMIGLLQCLALIPGT), 191 to 211 (AEFSFFLGIPVIIGAALLDFI), 225 to 245 (VLGIGTVVSFIIALLCIRLLV), and 255 to 275 (IFAWLRIITGVLVLIAAWGFG).

Belongs to the UppP family.

Its subcellular location is the cell inner membrane. The enzyme catalyses di-trans,octa-cis-undecaprenyl diphosphate + H2O = di-trans,octa-cis-undecaprenyl phosphate + phosphate + H(+). Catalyzes the dephosphorylation of undecaprenyl diphosphate (UPP). Confers resistance to bacitracin. The polypeptide is Undecaprenyl-diphosphatase (Psychrobacter cryohalolentis (strain ATCC BAA-1226 / DSM 17306 / VKM B-2378 / K5)).